Reading from the N-terminus, the 400-residue chain is Phosphoglycerate kinase (400 aa).

Substrate is bound by residues 23-25 (DLN), Arg-38, 61-64 (HFGR), Arg-120, and Arg-153. ATP is bound by residues Lys-203, Glu-325, and 355–358 (GGDT).

The protein belongs to the phosphoglycerate kinase family. As to quaternary structure, monomer.

The protein localises to the cytoplasm. The enzyme catalyses (2R)-3-phosphoglycerate + ATP = (2R)-3-phospho-glyceroyl phosphate + ADP. It participates in carbohydrate degradation; glycolysis; pyruvate from D-glyceraldehyde 3-phosphate: step 2/5. The polypeptide is Phosphoglycerate kinase (Rhizobium leguminosarum bv. trifolii (strain WSM2304)).